The following is a 146-amino-acid chain: Cytochrome c-556 (146 aa).

An N-terminal signal peptide occupies residues 1 to 24 (MCMKLKTITAAMLFGCLCAGAVYA). 4 residues coordinate heme c: Met35, Cys135, Cys138, and His139.

Monomer. In terms of processing, binds 1 heme c group covalently per subunit.

Functionally, low-spin monoheme cytochrome c. This is Cytochrome c-556 from Agrobacterium fabrum (strain C58 / ATCC 33970) (Agrobacterium tumefaciens (strain C58)).